We begin with the raw amino-acid sequence, 354 residues long: Major egg antigen (354 aa).

The interval 1–21 (MSGGKQHNAVSIPVNREQRSF) is disordered. 2 consecutive sHSP domains span residues 122–233 (SVND…VAVR) and 251–354 (AKGV…AITH).

This sequence belongs to the small heat shock protein (HSP20) family.

This Schistosoma mansoni (Blood fluke) protein is Major egg antigen.